Here is a 957-residue protein sequence, read N- to C-terminus: ERC protein 2 (957 aa).

Polar residues predominate over residues 1–13 (MYGSARTISNPEG). The tract at residues 1-44 (MYGSARTISNPEGSPSRSPRLPRSPRLGHRRTSSGGGGGTGKTL) is disordered. Positions 14–25 (SPSRSPRLPRSP) are enriched in low complexity. Phosphoserine occurs at positions 65 and 666. Residues 140 to 917 (RQVRDSTMLD…RMKLMADNYD (778 aa)) are a coiled coil. The segment at 760–957 (DQNKKVANLK…DQDDEEGIWA (198 aa)) is involved in binding to RIMS1. Residues 918–957 (DDHHHYHHHHHHHHHRSPGRSQHSNHRPSPDQDDEEGIWA) are disordered. Residues 922–943 (HYHHHHHHHHHRSPGRSQHSNH) show a composition bias toward basic residues. Residues 948–957 (DQDDEEGIWA) are compositionally biased toward acidic residues.

As to quaternary structure, interacts with BSN, ERC1, PPFIA1, PPFIA2, PPFIA3 and PPFIA4. Interacts through its C-terminus with the PDZ domain of RIMS1. Part of a complex consisting of ERC2, RIMS1 and UNC13A. Predominantly expressed in brain, including hippocampus, cortex, cerebellum, amygdala and olfactory bulb.

Its subcellular location is the cytoplasm. It is found in the synapse. The protein localises to the presynaptic active zone. It localises to the cytoskeleton. Thought to be involved in the organization of the cytomatrix at the nerve terminals active zone (CAZ) which regulates neurotransmitter release. Seems to act together with BSN. May recruit liprin-alpha proteins to the CAZ. The protein is ERC protein 2 (Erc2) of Rattus norvegicus (Rat).